Here is a 415-residue protein sequence, read N- to C-terminus: D-galactonate dehydratase family member RspA (415 aa).

Residues asparagine 48 and histidine 133 each contribute to the substrate site. Tyrosine 170 (proton donor/acceptor) is an active-site residue. Aspartate 223 contacts Mg(2+). Histidine 225 serves as the catalytic Proton donor/acceptor. Mg(2+)-binding residues include glutamate 249 and glutamate 275. Positions 275, 296, 325, 329, and 352 each coordinate substrate.

Belongs to the mandelate racemase/muconate lactonizing enzyme family. GalD subfamily. Mg(2+) is required as a cofactor.

It catalyses the reaction D-mannonate = 2-dehydro-3-deoxy-D-gluconate + H2O. In terms of biological role, has low D-mannonate dehydratase activity (in vitro), suggesting that this is not a physiological substrate and that it has no significant role in D-mannonate degradation in vivo. Has no detectable activity with a panel of 70 other acid sugars (in vitro). The polypeptide is D-galactonate dehydratase family member RspA (rspA) (Escherichia coli (strain MS 21-1)).